Consider the following 316-residue polypeptide: Probable cell division protein WhiA (316 aa).

Residues 280 to 313 (SLKELGEMLEPPVGKSGVNHRLRKIEKIAEELRT) constitute a DNA-binding region (H-T-H motif).

This sequence belongs to the WhiA family.

Its function is as follows. Involved in cell division and chromosome segregation. This chain is Probable cell division protein WhiA, found in Clostridium perfringens (strain ATCC 13124 / DSM 756 / JCM 1290 / NCIMB 6125 / NCTC 8237 / Type A).